Here is a 200-residue protein sequence, read N- to C-terminus: Recombination protein RecR (200 aa).

The C4-type zinc-finger motif lies at 57–72; the sequence is CRSCRTLTEEELCPQC. Positions 80–175 constitute a Toprim domain; the sequence is TLLCVVEGPT…VASRIAHGVP (96 aa).

It belongs to the RecR family.

Functionally, may play a role in DNA repair. It seems to be involved in an RecBC-independent recombinational process of DNA repair. It may act with RecF and RecO. This chain is Recombination protein RecR, found in Pseudomonas savastanoi pv. phaseolicola (strain 1448A / Race 6) (Pseudomonas syringae pv. phaseolicola (strain 1448A / Race 6)).